The sequence spans 364 residues: Pectinesterase 1 (364 aa).

The first 22 residues, 1 to 22 (MSCIAVEAVLLGILLYIPIVLS), serve as a signal peptide directing secretion. N103 is a glycosylation site (N-linked (GlcNAc...) asparagine). D220 is a catalytic residue.

The protein belongs to the pectinesterase family. Post-translationally, glycosylated. Expressed in pollen.

Its subcellular location is the secreted. The enzyme catalyses [(1-&gt;4)-alpha-D-galacturonosyl methyl ester](n) + n H2O = [(1-&gt;4)-alpha-D-galacturonosyl](n) + n methanol + n H(+). It participates in glycan metabolism; pectin degradation; 2-dehydro-3-deoxy-D-gluconate from pectin: step 1/5. Catalyzes the demethylesterification of homogalacturonan components of pectin. May be involved in pollen tube development. This chain is Pectinesterase 1, found in Olea europaea (Common olive).